The sequence spans 843 residues: Phosphatidylinositol-glycan-specific phospholipase D (843 aa).

The N-terminal stretch at methionine 1–serine 23 is a signal peptide. N-linked (GlcNAc...) asparagine glycosylation is found at asparagine 94, asparagine 271, asparagine 292, asparagine 308, and asparagine 322. FG-GAP repeat units lie at residues serine 368–proline 429, aspartate 435–serine 498, serine 500–lysine 560, threonine 564–arginine 625, glutamine 635–arginine 695, alanine 707–aspartate 773, and glutamine 791–aspartate 843. N-linked (GlcNAc...) asparagine glycans are attached at residues asparagine 483, asparagine 502, asparagine 592, asparagine 605, and asparagine 661.

It belongs to the GPLD1 family. As to quaternary structure, monomer. Glycosylated.

Its subcellular location is the secreted. The catalysed reaction is a 6-(alpha-D-glucosaminyl)-1-(1,2-diacyl-sn-glycero-3-phospho)-1D-myo-inositol + H2O = 6-(alpha-D-glucosaminyl)-1D-myo-inositol + a 1,2-diacyl-sn-glycero-3-phosphate + H(+). Its function is as follows. This protein hydrolyzes the inositol phosphate linkage in proteins anchored by phosphatidylinositol glycans (GPI-anchor) thus releasing these proteins from the membrane. This Rattus norvegicus (Rat) protein is Phosphatidylinositol-glycan-specific phospholipase D (Gpld1).